Reading from the N-terminus, the 644-residue chain is Protein SNOWY COTYLEDON 3 (644 aa).

Disordered stretches follow at residues 1–129 (MVAA…TRTE), 162–252 (ETAT…DGRL), and 290–414 (SDTD…SRVR). A compositionally biased stretch (low complexity) spans 53 to 77 (SPSPSHSTTTTTTTATSTSTSSSSS). The span at 91 to 112 (LSRTTNSASNLVYTPSSLPKRS) shows a compositional bias: polar residues. Positions 172–190 (CTPERRRATPVRDQRENSK) are enriched in basic and acidic residues. Composition is skewed to polar residues over residues 290–302 (SDTD…STNG) and 314–332 (TRSL…QETN). Composition is skewed to low complexity over residues 343 to 370 (SPQC…SSDS) and 397 to 412 (ATAT…SPSR). Residues 463 to 466 (QWRF) carry the QWRF motif motif.

The protein belongs to the QWRF family. Expressed in young developing tissues, such as seedlings, roots, flowers, buds and young siliques, and to a lesser extent in mature green tissues.

Its subcellular location is the peroxisome. In terms of biological role, probable microtubule-associated peroxisomal protein required for chloroplast biogenesis and for the formation of the prolamellar body and prothylakoids in etioplasts. Not involved in peroxisomal metabolism, including mobilization of storage compounds during germination, fatty acid beta-oxydation or photorespiration. This is Protein SNOWY COTYLEDON 3 (SCO3) from Arabidopsis thaliana (Mouse-ear cress).